A 347-amino-acid polypeptide reads, in one-letter code: Probable RNA methyltransferase Lcho_2507 (347 aa).

Glu89 serves as the catalytic Proton acceptor. The Radical SAM core domain occupies 92-318 (LLPRDGLCVS…TKLRQSAGQD (227 aa)). Cys99 and Cys323 are oxidised to a cystine. Cys106, Cys110, and Cys113 together coordinate [4Fe-4S] cluster. S-adenosyl-L-methionine is bound by residues 151-152 (GE), Ser181, 204-206 (SLH), and Asn280. Cys323 acts as the S-methylcysteine intermediate in catalysis.

The protein belongs to the radical SAM superfamily. RlmN family. [4Fe-4S] cluster is required as a cofactor.

It is found in the cytoplasm. The chain is Probable RNA methyltransferase Lcho_2507 from Leptothrix cholodnii (strain ATCC 51168 / LMG 8142 / SP-6) (Leptothrix discophora (strain SP-6)).